The chain runs to 388 residues: Dipeptidase verJ (388 aa).

Residues His-29, Asp-31, and Glu-142 each coordinate Zn(2+). Substrate is bound by residues His-169, Arg-243, and Asp-300.

The protein belongs to the metallo-dependent hydrolases superfamily. Peptidase M19 family. Requires Zn(2+) as cofactor.

It catalyses the reaction an L-aminoacyl-L-amino acid + H2O = 2 an L-alpha-amino acid. The protein operates within mycotoxin biosynthesis. Its function is as follows. Dipeptidase; part of the gene cluster that mediates the biosynthesis of 11'-deoxyverticillin A, one of the dimeric epipolythiodioxopiperazines (ETPs) from the verticillin family that act as mycotoxins. 11'-deoxyverticillin A is required for normal conidiation. The nonribosomal peptide synthetase verP is speculated to be responsible for condensation of amino acids to form the carbon skeleton of verticillin, whereas the cluster-specific tailoring enzymes are involved in further modifications leading to the production of 11'-deoxyverticillin A. The polypeptide is Dipeptidase verJ (Clonostachys rogersoniana).